The following is a 427-amino-acid chain: Peptidase B (427 aa).

Residues lysine 195 and aspartate 200 each contribute to the Mn(2+) site. Residue lysine 207 is part of the active site. Mn(2+) contacts are provided by aspartate 218, aspartate 277, and glutamate 279. Residue arginine 281 is part of the active site.

The protein belongs to the peptidase M17 family. As to quaternary structure, homohexamer. It depends on Mn(2+) as a cofactor.

The protein localises to the cytoplasm. It catalyses the reaction Release of an N-terminal amino acid, Xaa, from a peptide or arylamide. Xaa is preferably Glu or Asp but may be other amino acids, including Leu, Met, His, Cys and Gln.. Probably plays an important role in intracellular peptide degradation. This is Peptidase B from Escherichia coli O127:H6 (strain E2348/69 / EPEC).